Reading from the N-terminus, the 399-residue chain is Ribonucleoside-diphosphate reductase small chain 1 (399 aa).

Residues serine 15, serine 24, and serine 41 each carry the phosphoserine modification. Residues aspartate 145, glutamate 176, and histidine 179 each contribute to the Fe cation site. The active site involves tyrosine 183. Fe cation-binding residues include glutamate 239, glutamate 273, and histidine 276.

It belongs to the ribonucleoside diphosphate reductase small chain family. In terms of assembly, heterotetramer of two large (R1) and two small (R2) subunits. S.cerevisiae has two different R1 subunits (RNR1 and RNR3) and two different R2 subunits (RNR2 and RNR4). The functional form of the small subunits is a RNR2-RNR4 heterodimer, where RNR2 provides the iron-radical center and RNR4 is required for proper folding of RNR2 and assembly with the large subunits. Under normal growth conditions, the active form of the large subunits is a homodimer of the constitutively expressed RNR1. In damaged cells or cells arrested for DNA synthesis, the reductase consists of multiple species because of the association of the small subunits (RNR2-RNR4) with either the RNR1 homodimer or a heterodimer of RNR1 and the damage-inducible RNR3. Interacts with DIF1. It depends on Fe cation as a cofactor.

The protein resides in the nucleus. It catalyses the reaction a 2'-deoxyribonucleoside 5'-diphosphate + [thioredoxin]-disulfide + H2O = a ribonucleoside 5'-diphosphate + [thioredoxin]-dithiol. Provides the precursors necessary for DNA synthesis. Catalyzes the biosynthesis of deoxyribonucleotides from the corresponding ribonucleotides. RNR2 provides the diiron-tyrosyl radical center. This is Ribonucleoside-diphosphate reductase small chain 1 (RNR2) from Saccharomyces cerevisiae (strain ATCC 204508 / S288c) (Baker's yeast).